The following is a 531-amino-acid chain: RNA-binding protein RO60 (531 aa).

The 337-residue stretch at 24–360 (VRNNAGGFVY…AFGNVQPANT (337 aa)) folds into the TROVE domain. Residues 128–274 (RTGTMLLHFL…TNGLTWLLRN (147 aa)) are RNA-binding. A VWFA-like domain region spans residues 352–531 (FGNVQPANTR…VMTAFARGEV (180 aa)). Residues serine 369, serine 371, and threonine 438 each coordinate a divalent metal cation.

This sequence belongs to the Ro 60 kDa family. As to quaternary structure, forms oligomers upon binding DrY RNA, The multimers are of an average size of 700 kDa and are composed of around 12 molecules of Rsr-DrY RNA.

Its subcellular location is the cytoplasm. Binds to several small RNAs that accumulate during recovery from UV irradiation. Contributes to the resistance of D.radiodurans to ultraviolet irradiation. In Deinococcus radiodurans (strain ATCC 13939 / DSM 20539 / JCM 16871 / CCUG 27074 / LMG 4051 / NBRC 15346 / NCIMB 9279 / VKM B-1422 / R1), this protein is RNA-binding protein RO60.